Consider the following 300-residue polypeptide: Ribosomal protein L11 methyltransferase (300 aa).

Positions 152, 173, 195, and 234 each coordinate S-adenosyl-L-methionine.

It belongs to the methyltransferase superfamily. PrmA family.

It localises to the cytoplasm. The catalysed reaction is L-lysyl-[protein] + 3 S-adenosyl-L-methionine = N(6),N(6),N(6)-trimethyl-L-lysyl-[protein] + 3 S-adenosyl-L-homocysteine + 3 H(+). Methylates ribosomal protein L11. This is Ribosomal protein L11 methyltransferase from Paraburkholderia phymatum (strain DSM 17167 / CIP 108236 / LMG 21445 / STM815) (Burkholderia phymatum).